We begin with the raw amino-acid sequence, 392 residues long: Chaperone protein DnaJ (392 aa).

The J domain maps to 2 to 67 (DYYTILGVAK…QKRESYDRYG (66 aa)). The segment at 149–227 (GVEKELLVSG…CRGQGRIKDK (79 aa)) adopts a CR-type zinc-finger fold. Positions 162, 165, 179, 182, 201, 204, 215, and 218 each coordinate Zn(2+). 4 CXXCXGXG motif repeats span residues 162–169 (CDACSGSG), 179–186 (CDRCKGSG), 201–208 (CPDCSGEG), and 215–222 (CSVCRGQG).

It belongs to the DnaJ family. As to quaternary structure, homodimer. Zn(2+) serves as cofactor.

It localises to the cytoplasm. In terms of biological role, participates actively in the response to hyperosmotic and heat shock by preventing the aggregation of stress-denatured proteins and by disaggregating proteins, also in an autonomous, DnaK-independent fashion. Unfolded proteins bind initially to DnaJ; upon interaction with the DnaJ-bound protein, DnaK hydrolyzes its bound ATP, resulting in the formation of a stable complex. GrpE releases ADP from DnaK; ATP binding to DnaK triggers the release of the substrate protein, thus completing the reaction cycle. Several rounds of ATP-dependent interactions between DnaJ, DnaK and GrpE are required for fully efficient folding. Also involved, together with DnaK and GrpE, in the DNA replication of plasmids through activation of initiation proteins. This chain is Chaperone protein DnaJ, found in Chlamydia trachomatis serovar L2 (strain ATCC VR-902B / DSM 19102 / 434/Bu).